The primary structure comprises 338 residues: Nucleoid-associated protein PM1885 (338 aa).

The protein belongs to the YejK family.

The protein resides in the cytoplasm. It is found in the nucleoid. The protein is Nucleoid-associated protein PM1885 of Pasteurella multocida (strain Pm70).